The primary structure comprises 370 residues: Gametogenetin-binding protein 1 (370 aa).

2 disordered regions span residues 26–114 (VGSK…QTLT) and 240–263 (PAAP…EEAV). Residues 31–49 (GSKSTNKPLTRSQPSSSWE) show a composition bias toward polar residues. Positions 225-370 (LYKQLQKSAM…DEMGNWPPPD (146 aa)) are required for induction of mitochondrial fragmentation. Over residues 250–260 (GLPHEEKGERE) the composition is skewed to basic and acidic residues. The tract at residues 298–370 (KKFRSTDTVG…DEMGNWPPPD (73 aa)) is interaction with GGN.

Interacts with CCDC159. Interacts with isoform 1 and isoform 2 of GGN. In terms of tissue distribution, testis-specific. In the testis, expressed only in germ cells and not in somatic cells. Expression starts in late primary spermatocytes in stage X-XII tubules and gradually increases towards step 1-3 spermatids in stage I-III tubules. Expression then declines continuously and disappears after step 7 spermatids in stage VII tubules (at protein level).

It localises to the cytoplasm. The protein localises to the membrane. Its subcellular location is the golgi apparatus. It is found in the mitochondrion intermembrane space. Functionally, induces mitochondrial fragmentation, possibly by promoting DNM1L-dependent fission and may play a role in mitochondrial morphogenesis during spermatogenesis. This is Gametogenetin-binding protein 1 (Ggnbp1) from Mus musculus (Mouse).